Consider the following 527-residue polypeptide: 2-isopropylmalate synthase (527 aa).

The Pyruvate carboxyltransferase domain occupies 18 to 280 (IRIFDTTLRD…QTNINSKRLV (263 aa)). Mn(2+)-binding residues include Asp-27, His-215, His-217, and Asn-251. Residues 405–527 (TLVDYEVTSG…ASDPGELPQP (123 aa)) are regulatory domain.

The protein belongs to the alpha-IPM synthase/homocitrate synthase family. LeuA type 1 subfamily. As to quaternary structure, homodimer. Mn(2+) is required as a cofactor.

The protein localises to the cytoplasm. The catalysed reaction is 3-methyl-2-oxobutanoate + acetyl-CoA + H2O = (2S)-2-isopropylmalate + CoA + H(+). Its pathway is amino-acid biosynthesis; L-leucine biosynthesis; L-leucine from 3-methyl-2-oxobutanoate: step 1/4. In terms of biological role, catalyzes the condensation of the acetyl group of acetyl-CoA with 3-methyl-2-oxobutanoate (2-ketoisovalerate) to form 3-carboxy-3-hydroxy-4-methylpentanoate (2-isopropylmalate). This chain is 2-isopropylmalate synthase, found in Rhodopirellula baltica (strain DSM 10527 / NCIMB 13988 / SH1).